The following is a 77-amino-acid chain: Acyl carrier protein (77 aa).

The region spanning 1–76 (MSLEDDVKAI…DVIKYIQEHQ (76 aa)) is the Carrier domain. Position 36 is an O-(pantetheine 4'-phosphoryl)serine (Ser36).

It belongs to the acyl carrier protein (ACP) family. In terms of processing, 4'-phosphopantetheine is transferred from CoA to a specific serine of apo-ACP by AcpS. This modification is essential for activity because fatty acids are bound in thioester linkage to the sulfhydryl of the prosthetic group.

The protein resides in the cytoplasm. The protein operates within lipid metabolism; fatty acid biosynthesis. Functionally, carrier of the growing fatty acid chain in fatty acid biosynthesis. The polypeptide is Acyl carrier protein (Chlamydia trachomatis serovar L2 (strain ATCC VR-902B / DSM 19102 / 434/Bu)).